Consider the following 405-residue polypeptide: Aminodeoxyfutalosine deaminase (405 aa).

Histidine 61 and histidine 63 together coordinate a divalent metal cation. Substrate contacts are provided by glutamate 141, serine 145, and histidine 179. Histidine 206 lines the a divalent metal cation pocket. Glutamate 209 (proton donor) is an active-site residue. Aspartate 306 is a binding site for a divalent metal cation.

This sequence belongs to the metallo-dependent hydrolases superfamily. A divalent metal cation serves as cofactor.

It carries out the reaction 6-amino-6-deoxyfutalosine + H2O + H(+) = futalosine + NH4(+). Its pathway is quinol/quinone metabolism; menaquinone biosynthesis. Its function is as follows. Catalyzes the deamination of aminodeoxyfutalosine (AFL) into futalosine (FL), a step in the biosynthesis of menaquinone (MK, vitamin K2). To a lesser extent, can also deaminate 5'-methylthioadenosine. This is Aminodeoxyfutalosine deaminase from Nitratiruptor sp. (strain SB155-2).